The chain runs to 869 residues: Bifunctional uridylyltransferase/uridylyl-removing enzyme (869 aa).

The segment at 1–332 is uridylyltransferase; it reads MTATPADRPD…QFDGEAVPVQ (332 aa). The segment at 333 to 691 is uridylyl-removing; that stretch reads LDAGFSLRRG…RRAVPDNDAL (359 aa). The HD domain maps to 450 to 572; the sequence is VDQHTLMVLR…VGTRERLDYL (123 aa). ACT domains follow at residues 692 to 771 and 798 to 869; these read EVFV…PSRR and RISL…LDPT.

This sequence belongs to the GlnD family. Mg(2+) is required as a cofactor.

It carries out the reaction [protein-PII]-L-tyrosine + UTP = [protein-PII]-uridylyl-L-tyrosine + diphosphate. It catalyses the reaction [protein-PII]-uridylyl-L-tyrosine + H2O = [protein-PII]-L-tyrosine + UMP + H(+). With respect to regulation, uridylyltransferase (UTase) activity is inhibited by glutamine, while glutamine activates uridylyl-removing (UR) activity. Its function is as follows. Modifies, by uridylylation and deuridylylation, the PII regulatory proteins (GlnB and homologs), in response to the nitrogen status of the cell that GlnD senses through the glutamine level. Under low glutamine levels, catalyzes the conversion of the PII proteins and UTP to PII-UMP and PPi, while under higher glutamine levels, GlnD hydrolyzes PII-UMP to PII and UMP (deuridylylation). Thus, controls uridylylation state and activity of the PII proteins, and plays an important role in the regulation of nitrogen assimilation and metabolism. This Xanthomonas campestris pv. campestris (strain B100) protein is Bifunctional uridylyltransferase/uridylyl-removing enzyme.